Consider the following 389-residue polypeptide: S-adenosylmethionine synthase (389 aa).

His15 is a binding site for ATP. Mg(2+) is bound at residue Asp17. Glu43 serves as a coordination point for K(+). Residues Glu56 and Gln99 each coordinate L-methionine. The tract at residues 99–109 is flexible loop; sequence QSPDIAQGVNE. ATP contacts are provided by residues 166 to 168, 234 to 235, Asp243, 249 to 250, Ala266, and Lys270; these read DAK, RF, and RK. L-methionine is bound at residue Asp243. Lys274 provides a ligand contact to L-methionine.

It belongs to the AdoMet synthase family. As to quaternary structure, homotetramer; dimer of dimers. Mg(2+) serves as cofactor. It depends on K(+) as a cofactor.

The protein localises to the cytoplasm. The catalysed reaction is L-methionine + ATP + H2O = S-adenosyl-L-methionine + phosphate + diphosphate. It functions in the pathway amino-acid biosynthesis; S-adenosyl-L-methionine biosynthesis; S-adenosyl-L-methionine from L-methionine: step 1/1. Its function is as follows. Catalyzes the formation of S-adenosylmethionine (AdoMet) from methionine and ATP. The overall synthetic reaction is composed of two sequential steps, AdoMet formation and the subsequent tripolyphosphate hydrolysis which occurs prior to release of AdoMet from the enzyme. The chain is S-adenosylmethionine synthase from Chromobacterium violaceum (strain ATCC 12472 / DSM 30191 / JCM 1249 / CCUG 213 / NBRC 12614 / NCIMB 9131 / NCTC 9757 / MK).